Consider the following 186-residue polypeptide: Translation initiation factor IF-3 (186 aa).

This sequence belongs to the IF-3 family. As to quaternary structure, monomer.

It localises to the cytoplasm. Its function is as follows. IF-3 binds to the 30S ribosomal subunit and shifts the equilibrium between 70S ribosomes and their 50S and 30S subunits in favor of the free subunits, thus enhancing the availability of 30S subunits on which protein synthesis initiation begins. In Chlamydia caviae (strain ATCC VR-813 / DSM 19441 / 03DC25 / GPIC) (Chlamydophila caviae), this protein is Translation initiation factor IF-3.